A 349-amino-acid chain; its full sequence is Phosphate acyltransferase (349 aa).

This sequence belongs to the PlsX family. As to quaternary structure, homodimer. Probably interacts with PlsY.

The protein localises to the cytoplasm. It carries out the reaction a fatty acyl-[ACP] + phosphate = an acyl phosphate + holo-[ACP]. Its pathway is lipid metabolism; phospholipid metabolism. Functionally, catalyzes the reversible formation of acyl-phosphate (acyl-PO(4)) from acyl-[acyl-carrier-protein] (acyl-ACP). This enzyme utilizes acyl-ACP as fatty acyl donor, but not acyl-CoA. This chain is Phosphate acyltransferase, found in Albidiferax ferrireducens (strain ATCC BAA-621 / DSM 15236 / T118) (Rhodoferax ferrireducens).